The primary structure comprises 642 residues: Threonine--tRNA ligase (642 aa).

The region spanning 1–61 (MPVITLPDGS…ETDVDLAIIT (61 aa)) is the TGS domain. The tract at residues 243–534 (DHRKIGKQLD…LIEEYAGKFP (292 aa)) is catalytic. Zn(2+)-binding residues include cysteine 334, histidine 385, and histidine 511.

It belongs to the class-II aminoacyl-tRNA synthetase family. As to quaternary structure, homodimer. The cofactor is Zn(2+).

It is found in the cytoplasm. It catalyses the reaction tRNA(Thr) + L-threonine + ATP = L-threonyl-tRNA(Thr) + AMP + diphosphate + H(+). Functionally, catalyzes the attachment of threonine to tRNA(Thr) in a two-step reaction: L-threonine is first activated by ATP to form Thr-AMP and then transferred to the acceptor end of tRNA(Thr). Also edits incorrectly charged L-seryl-tRNA(Thr). The polypeptide is Threonine--tRNA ligase (Shewanella loihica (strain ATCC BAA-1088 / PV-4)).